Consider the following 480-residue polypeptide: CASP8 and FADD-like apoptosis regulator (480 aa).

DED domains follow at residues M1–K73 and D92–K170. Residues M1–K195 form an interaction with CASP8 region. Positions M1–S227 are interaction with FADD. The segment at M1–Y305 is interaction with CASP8 propeptide. The segment at M1–R435 is not proteolytically processed and involved in apoptosis inhibition. Residues K192 to R435 form an interaction with CASP3 region. Positions K192–T480 are interaction with TRAF1 and TRAF2. The tract at residues L217–T480 is interaction with CASP8 subunits p18 and p10. Positions E263–Q358 are caspase. Positions S370–T480 are interaction with CASP8.

The protein belongs to the peptidase C14A family. As to quaternary structure, TNFRSF6 stimulation triggers recruitment to the death-inducing signaling complex (DISC) formed by TNFRSF6, FADD and CASP8. A proteolytic fragment (p43) stays associated with the DISC. Interacts with RIPK1. Proteolytically processed by CASP8 generating subunit p43 and p12.

Apoptosis regulator protein which may function as a crucial link between cell survival and cell death pathways in mammalian cells. Acts as an inhibitor of TNFRSF6 mediated apoptosis. A proteolytic fragment (p43) is likely retained in the death-inducing signaling complex (DISC) thereby blocking further recruitment and processing of caspase-8 at the complex. Full length and shorter isoforms have been shown either to induce apoptosis or to reduce TNFRSF-triggered apoptosis. Lacks enzymatic (caspase) activity. The protein is CASP8 and FADD-like apoptosis regulator (CFLAR) of Pongo abelii (Sumatran orangutan).